The following is a 474-amino-acid chain: uncharacterized protein (474 aa).

Residues 374 to 398 (GLICYLALFSISLMIENIIGLTISL) form a helical membrane-spanning segment.

It is found in the membrane. This is an uncharacterized protein from Borreliella burgdorferi (strain ATCC 35210 / DSM 4680 / CIP 102532 / B31) (Borrelia burgdorferi).